The chain runs to 413 residues: 1-deoxy-D-xylulose 5-phosphate reductoisomerase (413 aa).

Residues Thr-13, Gly-14, Ser-15, Ile-16, Arg-40, Asn-41, and Asn-127 each coordinate NADPH. Position 128 (Lys-128) interacts with 1-deoxy-D-xylulose 5-phosphate. Glu-129 provides a ligand contact to NADPH. Residue Asp-153 coordinates Mn(2+). 1-deoxy-D-xylulose 5-phosphate is bound by residues Ser-154, Glu-155, Ser-184, and His-207. A Mn(2+)-binding site is contributed by Glu-155. Gly-213 is an NADPH binding site. Residues Ser-220, Asn-225, Lys-226, and Glu-229 each contribute to the 1-deoxy-D-xylulose 5-phosphate site. Glu-229 provides a ligand contact to Mn(2+).

Belongs to the DXR family. The cofactor is Mg(2+). It depends on Mn(2+) as a cofactor.

It carries out the reaction 2-C-methyl-D-erythritol 4-phosphate + NADP(+) = 1-deoxy-D-xylulose 5-phosphate + NADPH + H(+). It participates in isoprenoid biosynthesis; isopentenyl diphosphate biosynthesis via DXP pathway; isopentenyl diphosphate from 1-deoxy-D-xylulose 5-phosphate: step 1/6. Catalyzes the NADPH-dependent rearrangement and reduction of 1-deoxy-D-xylulose-5-phosphate (DXP) to 2-C-methyl-D-erythritol 4-phosphate (MEP). This Nitrosomonas europaea (strain ATCC 19718 / CIP 103999 / KCTC 2705 / NBRC 14298) protein is 1-deoxy-D-xylulose 5-phosphate reductoisomerase.